Reading from the N-terminus, the 275-residue chain is UPF0328 protein ECU05_0050 (275 aa).

It belongs to the UPF0328 family.

The polypeptide is UPF0328 protein ECU05_0050 (Encephalitozoon cuniculi (strain GB-M1) (Microsporidian parasite)).